The primary structure comprises 263 residues: Lens fiber major intrinsic protein (263 aa).

The Cytoplasmic portion of the chain corresponds to 1 to 9 (MWELRSASF). The helical transmembrane segment at 10 to 29 (WRAIFAEFFATLFYVFFGLG) threads the bilayer. The Extracellular segment spans residues 30-41 (SSLRWAPGPLHV). Residues 42–59 (LQVALAFGLALATLVQTV) traverse the membrane as a helical segment. Over 60-61 (GH) the chain is Cytoplasmic. Positions 62–77 (ISGAHVNPAVTFAFLV) form an intramembrane region, discontinuously helical. An NPA 1 motif is present at residues 68–70 (NPA). The Cytoplasmic segment spans residues 78–82 (GSQMS). A helical membrane pass occupies residues 83-106 (LLRAFCYIAAQLLGAVAGAAVLYS). Over 107-127 (VTPPAVRGNLALNTLHAGVSV) the chain is Extracellular. A helical membrane pass occupies residues 128-148 (GQATTVEIFLTLQFVLCIFAT). The Cytoplasmic portion of the chain corresponds to 149-156 (YDERRNGR). Residues 157–175 (MGSVALAVGFSLTLGHLFG) traverse the membrane as a helical segment. At 176–178 (MYY) the chain is on the extracellular side. The discontinuously helical intramembrane region spans 179-193 (TGAGMNPARSFAPAI). The NPA 2 motif lies at 184-186 (NPA). Over 194–200 (LTRNFSN) the chain is Extracellular. A helical membrane pass occupies residues 201 to 222 (HWVYWVGPIIGGGLGSLLYDFL). Residues 223–263 (LFPRLKSVSERLSILKGARPSDSNGQPEGTGEPVELKTQAL) are Cytoplasmic-facing. The segment at 227–237 (LKSVSERLSIL) is interaction with CALM. A phosphoserine mark is found at S235, S243, and S245. Residues 240–263 (ARPSDSNGQPEGTGEPVELKTQAL) are disordered. Deamidated asparagine is present on N246.

The protein belongs to the MIP/aquaporin (TC 1.A.8) family. In terms of assembly, homotetramer; each monomer provides an independent water pore. Two homotetramers on opposing membranes can dimerize, forming a cell-cell junction. Interacts with CALM; the calcium-calmodulin/CALM complex interacts with the cytoplasmic domains of two aquaporins, leading to channel closure. Interacts with BFSP1 (via C-terminus); prevents calcium-dependent inhibition of the water channel activity. Post-translationally, subject to partial proteolytic cleavage in the eye lens core. Partial proteolysis promotes interactions between tetramers from adjoining membranes. In terms of processing, fatty acylated at Met-1 and Lys-238. The acyl modifications, in decreasing order of ion abundance, are: oleoyl (C18:1) &gt; palmitoyl (C16:0) &gt; stearoyl (C18:0) &gt; eicosenoyl (C20:1) &gt; dihomo-gamma-linolenoyl (C20:3) &gt; palmitoleoyl (C16:1) &gt; eicosadienoyl (C20:2).

The protein resides in the cell membrane. It localises to the cell junction. The enzyme catalyses H2O(in) = H2O(out). With respect to regulation, the water channel activity is inhibited by calcium through calmodulin/CALM. In terms of biological role, aquaporins form homotetrameric transmembrane channels, with each monomer independently mediating water transport across the plasma membrane along its osmotic gradient. Specifically expressed in lens fiber cells, this aquaporin is crucial for maintaining lens water homeostasis and transparency. Beyond water permeability, it also acts as a cell-to-cell adhesion molecule, forming thin junctions between lens fiber cells that are essential for maintaining the ordered structure and transparency of the lens. This is Lens fiber major intrinsic protein from Rattus norvegicus (Rat).